A 359-amino-acid chain; its full sequence is Nicotinate-nucleotide--dimethylbenzimidazole phosphoribosyltransferase (359 aa).

Catalysis depends on glutamate 318, which acts as the Proton acceptor.

This sequence belongs to the CobT family. Homodimer.

The enzyme catalyses 5,6-dimethylbenzimidazole + nicotinate beta-D-ribonucleotide = alpha-ribazole 5'-phosphate + nicotinate + H(+). It participates in nucleoside biosynthesis; alpha-ribazole biosynthesis; alpha-ribazole from 5,6-dimethylbenzimidazole: step 1/2. In terms of biological role, catalyzes the synthesis of alpha-ribazole-5'-phosphate from nicotinate mononucleotide (NAMN) and 5,6-dimethylbenzimidazole (DMB). The protein is Nicotinate-nucleotide--dimethylbenzimidazole phosphoribosyltransferase of Escherichia coli O9:H4 (strain HS).